Consider the following 120-residue polypeptide: MFLLQKYDYFFVFLLIISFFSILIFSLSKWIAPINKGPEKFTSYESGIEPMGEACIQFQIRYYMFALVFVIFDVETVFLYPWAMSFYNFGISSFIEALIFILILIIGLVYAWRKGALEWS.

Transmembrane regions (helical) follow at residues 7–27, 64–84, and 89–109; these read YDYF…IFSL, MFAL…PWAM, and FGIS…IGLV.

It belongs to the complex I subunit 3 family. As to quaternary structure, NDH is composed of at least 16 different subunits, 5 of which are encoded in the nucleus.

Its subcellular location is the plastid. The protein localises to the chloroplast thylakoid membrane. It catalyses the reaction a plastoquinone + NADH + (n+1) H(+)(in) = a plastoquinol + NAD(+) + n H(+)(out). The enzyme catalyses a plastoquinone + NADPH + (n+1) H(+)(in) = a plastoquinol + NADP(+) + n H(+)(out). In terms of biological role, NDH shuttles electrons from NAD(P)H:plastoquinone, via FMN and iron-sulfur (Fe-S) centers, to quinones in the photosynthetic chain and possibly in a chloroplast respiratory chain. The immediate electron acceptor for the enzyme in this species is believed to be plastoquinone. Couples the redox reaction to proton translocation, and thus conserves the redox energy in a proton gradient. In Marchantia polymorpha (Common liverwort), this protein is NAD(P)H-quinone oxidoreductase subunit 3, chloroplastic.